The following is a 329-amino-acid chain: GTP 3',8-cyclase (329 aa).

The 227-residue stretch at 8 to 234 (AFARKFYYLR…QLRQRSDGPA (227 aa)) folds into the Radical SAM core domain. A GTP-binding site is contributed by R17. Residues C24 and C28 each contribute to the [4Fe-4S] cluster site. Y30 is an S-adenosyl-L-methionine binding site. Residue C31 coordinates [4Fe-4S] cluster. A GTP-binding site is contributed by R68. Residue G72 coordinates S-adenosyl-L-methionine. T99 contacts GTP. Residue S123 coordinates S-adenosyl-L-methionine. K160 lines the GTP pocket. M194 contacts S-adenosyl-L-methionine. The [4Fe-4S] cluster site is built by C257 and C260. 262 to 264 (RLR) serves as a coordination point for GTP. C274 contacts [4Fe-4S] cluster.

It belongs to the radical SAM superfamily. MoaA family. In terms of assembly, monomer and homodimer. [4Fe-4S] cluster serves as cofactor.

The enzyme catalyses GTP + AH2 + S-adenosyl-L-methionine = (8S)-3',8-cyclo-7,8-dihydroguanosine 5'-triphosphate + 5'-deoxyadenosine + L-methionine + A + H(+). Its pathway is cofactor biosynthesis; molybdopterin biosynthesis. Catalyzes the cyclization of GTP to (8S)-3',8-cyclo-7,8-dihydroguanosine 5'-triphosphate. The chain is GTP 3',8-cyclase from Escherichia coli O45:K1 (strain S88 / ExPEC).